Consider the following 290-residue polypeptide: ATP synthase gamma chain (290 aa).

It belongs to the ATPase gamma chain family. F-type ATPases have 2 components, CF(1) - the catalytic core - and CF(0) - the membrane proton channel. CF(1) has five subunits: alpha(3), beta(3), gamma(1), delta(1), epsilon(1). CF(0) has three main subunits: a, b and c.

The protein resides in the cell membrane. Its function is as follows. Produces ATP from ADP in the presence of a proton gradient across the membrane. The gamma chain is believed to be important in regulating ATPase activity and the flow of protons through the CF(0) complex. The polypeptide is ATP synthase gamma chain (Buchnera aphidicola subsp. Acyrthosiphon pisum (strain 5A)).